The sequence spans 215 residues: Large ribosomal subunit protein uL4 (215 aa).

Positions 46–72 (TAKSKNRAEVSGGGRKPWAQKGGGRAR) are disordered. Positions 56–71 (SGGGRKPWAQKGGGRA) are enriched in gly residues.

This sequence belongs to the universal ribosomal protein uL4 family. Part of the 50S ribosomal subunit.

Functionally, one of the primary rRNA binding proteins, this protein initially binds near the 5'-end of the 23S rRNA. It is important during the early stages of 50S assembly. It makes multiple contacts with different domains of the 23S rRNA in the assembled 50S subunit and ribosome. In terms of biological role, forms part of the polypeptide exit tunnel. This is Large ribosomal subunit protein uL4 from Helicobacter pylori (strain J99 / ATCC 700824) (Campylobacter pylori J99).